A 156-amino-acid polypeptide reads, in one-letter code: MGKDRNLSLNSPESIQSVIGDTDIKIAVIAAMWHEKIVRGLIDGATREIVSSGSHAELFRVPGSVELVLACKKLLKTFDAAVALGVILRGETDHNTHIARLVLSGITDVMLALEKPIGIGVLTIDTEQQGLDRSSGDYNAGVNAARAVIRMVRLFR.

5-amino-6-(D-ribitylamino)uracil is bound by residues Trp33, 64–66 (SVE), and 86–88 (VIL). Position 91–92 (91–92 (ET)) interacts with (2S)-2-hydroxy-3-oxobutyl phosphate. Catalysis depends on His94, which acts as the Proton donor. Residue Ile119 participates in 5-amino-6-(D-ribitylamino)uracil binding. (2S)-2-hydroxy-3-oxobutyl phosphate is bound at residue Arg133.

Belongs to the DMRL synthase family.

It catalyses the reaction (2S)-2-hydroxy-3-oxobutyl phosphate + 5-amino-6-(D-ribitylamino)uracil = 6,7-dimethyl-8-(1-D-ribityl)lumazine + phosphate + 2 H2O + H(+). Its pathway is cofactor biosynthesis; riboflavin biosynthesis; riboflavin from 2-hydroxy-3-oxobutyl phosphate and 5-amino-6-(D-ribitylamino)uracil: step 1/2. In terms of biological role, catalyzes the formation of 6,7-dimethyl-8-ribityllumazine by condensation of 5-amino-6-(D-ribitylamino)uracil with 3,4-dihydroxy-2-butanone 4-phosphate. This is the penultimate step in the biosynthesis of riboflavin. The polypeptide is 6,7-dimethyl-8-ribityllumazine synthase (Tropheryma whipplei (strain TW08/27) (Whipple's bacillus)).